The sequence spans 641 residues: Peroxisomal targeting signal 1 receptor (641 aa).

Cysteine 12 participates in a covalent cross-link: Glycyl cysteine thioester (Cys-Gly) (interchain with G-Cter in ubiquitin). The amphipathic helix 1 (AH1) stretch occupies residues 12–34; that stretch reads CSEPNALGNFVQHFTNERSYHDK. The segment at 74-92 is amphipathic helix 2 (AH2); that stretch reads HLMMDRHLNLRDGPREHKE. Residues 261–288 are amphipathic helix 4 (AH4); that stretch reads VEAAWDETARRTISDITRPITQINDPKL. Positions 331–335 match the WxxxF/Y motif motif; that stretch reads WTEDY. TPR repeat units follow at residues 359–392, 393–426, 427–460, 503–536, 538–570, and 571–604; these read DSDT…NPEN, AMAW…DPTN, SKAR…TPEY, PEVQ…SPTD, QLWN…KPSY, and VRAR…HPAP.

The protein belongs to the peroxisomal targeting signal receptor family. As to quaternary structure, interacts (via WxxxF/Y and LVxEF motifs) with PEX14; promoting translocation through the PEX13-PEX14 docking complex. Interacts with PEX7, promoting peroxisomal import of proteins containing a C-terminal PTS2-type peroxisomal targeting signal. Post-translationally, monoubiquitinated at Cys-12 by PEX2 during PEX5 passage through the retrotranslocation channel. Cys-12 monoubiquitination acts as a recognition signal for the PEX1-PEX6 complex and is required for PEX5 extraction and export from peroxisomes. When PEX5 recycling is compromised, polyubiquitinated by PEX10 during its passage through the retrotranslocation channel, leading to its degradation.

It is found in the cytoplasm. The protein resides in the cytosol. It localises to the peroxisome matrix. Its function is as follows. Receptor that mediates peroxisomal import of proteins containing a C-terminal PTS1-type tripeptide peroxisomal targeting signal (SKL-type). Binds to cargo proteins containing a PTS1 peroxisomal targeting signal in the cytosol, and translocates them into the peroxisome matrix by passing through the PEX13-PEX14 docking complex along with cargo proteins. PEX5 receptor is then retrotranslocated into the cytosol, leading to release of bound cargo in the peroxisome matrix, and reset for a subsequent peroxisome import cycle. In terms of biological role, in addition to promoting peroxisomal translocation of proteins containing a PTS1 peroxisomal targeting signal, mediates peroxisomal import of proteins containing a C-terminal PTS2-type peroxisomal targeting signal via its interaction with PEX7. Interaction with PEX7 only takes place when PEX7 is associated with cargo proteins containing a PTS2 peroxisomal targeting signal. PEX7 along with PTS2-containing cargo proteins are then translocated through the PEX13-PEX14 docking complex together with PEX5. The polypeptide is Peroxisomal targeting signal 1 receptor (pex5) (Dictyostelium discoideum (Social amoeba)).